A 158-amino-acid chain; its full sequence is Glutathione peroxidase homolog BsaA (158 aa).

The active site involves Cys36.

The protein belongs to the glutathione peroxidase family.

This chain is Glutathione peroxidase homolog BsaA (bsaA), found in Staphylococcus aureus (strain COL).